Consider the following 222-residue polypeptide: Putative cobalt transport protein CbiM (222 aa).

The next 6 membrane-spanning stretches (helical) occupy residues 8–28 (LPME…GYGI), 43–63 (PLLA…LPSV), 75–95 (LGAI…VLLF), 107–127 (TLGA…YLVF), 134–154 (LNIT…TYLT), and 178–198 (IFAI…ALLW).

This sequence belongs to the CbiM family. As to quaternary structure, forms an energy-coupling factor (ECF) transporter complex composed of an ATP-binding protein (A component, CbiO), a transmembrane protein (T component, CbiQ) and 2 possible substrate-capture proteins (S components, CbiM and CbiN) of unknown stoichimetry.

Its subcellular location is the cell membrane. The protein operates within cofactor biosynthesis; adenosylcobalamin biosynthesis. Functionally, part of the energy-coupling factor (ECF) transporter complex CbiMNOQ involved in cobalt import. In Methanococcus voltae (strain ATCC BAA-1334 / A3), this protein is Putative cobalt transport protein CbiM.